We begin with the raw amino-acid sequence, 297 residues long: 4-diphosphocytidyl-2-C-methyl-D-erythritol kinase (297 aa).

Residue Lys-19 is part of the active site. ATP is bound at residue 105–115 (PIASGIGGGSA). Asp-147 is an active-site residue.

Belongs to the GHMP kinase family. IspE subfamily.

It catalyses the reaction 4-CDP-2-C-methyl-D-erythritol + ATP = 4-CDP-2-C-methyl-D-erythritol 2-phosphate + ADP + H(+). Its pathway is isoprenoid biosynthesis; isopentenyl diphosphate biosynthesis via DXP pathway; isopentenyl diphosphate from 1-deoxy-D-xylulose 5-phosphate: step 3/6. Functionally, catalyzes the phosphorylation of the position 2 hydroxy group of 4-diphosphocytidyl-2C-methyl-D-erythritol. The sequence is that of 4-diphosphocytidyl-2-C-methyl-D-erythritol kinase from Rhizobium etli (strain CIAT 652).